The primary structure comprises 215 residues: 3,4-dihydroxy-2-butanone 4-phosphate synthase (215 aa).

D-ribulose 5-phosphate contacts are provided by residues 38–39 (RE), Asp-43, 151–155 (RRGHT), and Glu-175. Residue Glu-39 participates in Mg(2+) binding. A Mg(2+)-binding site is contributed by His-154.

This sequence belongs to the DHBP synthase family. In terms of assembly, homodimer. Mg(2+) serves as cofactor. It depends on Mn(2+) as a cofactor.

The catalysed reaction is D-ribulose 5-phosphate = (2S)-2-hydroxy-3-oxobutyl phosphate + formate + H(+). The protein operates within cofactor biosynthesis; riboflavin biosynthesis; 2-hydroxy-3-oxobutyl phosphate from D-ribulose 5-phosphate: step 1/1. Catalyzes the conversion of D-ribulose 5-phosphate to formate and 3,4-dihydroxy-2-butanone 4-phosphate. The protein is 3,4-dihydroxy-2-butanone 4-phosphate synthase of Haemophilus influenzae (strain ATCC 51907 / DSM 11121 / KW20 / Rd).